Reading from the N-terminus, the 1462-residue chain is DNA polymerase III PolC-type (1462 aa).

An Exonuclease domain is found at 424 to 580; that stretch reads YVVFDVETTG…YDAEATGRLL (157 aa).

It belongs to the DNA polymerase type-C family. PolC subfamily.

The protein resides in the cytoplasm. It catalyses the reaction DNA(n) + a 2'-deoxyribonucleoside 5'-triphosphate = DNA(n+1) + diphosphate. Its function is as follows. Required for replicative DNA synthesis. This DNA polymerase also exhibits 3' to 5' exonuclease activity. This Streptococcus sanguinis (strain SK36) protein is DNA polymerase III PolC-type.